The chain runs to 314 residues: DNA-directed RNA polymerase subunit alpha (314 aa).

The interval 1 to 228 is alpha N-terminal domain (alpha-NTD); that stretch reads MAQYTIECVE…DQLRPLQEIT (228 aa). Residues 241–314 are alpha C-terminal domain (alpha-CTD); it reads NTVGQVPIEE…SLPKDKPARS (74 aa).

Belongs to the RNA polymerase alpha chain family. As to quaternary structure, in cyanobacteria the RNAP catalytic core is composed of 2 alpha, 1 beta, 1 beta', 1 gamma and 1 omega subunit. When a sigma factor is associated with the core the holoenzyme is formed, which can initiate transcription.

It carries out the reaction RNA(n) + a ribonucleoside 5'-triphosphate = RNA(n+1) + diphosphate. Functionally, DNA-dependent RNA polymerase catalyzes the transcription of DNA into RNA using the four ribonucleoside triphosphates as substrates. The protein is DNA-directed RNA polymerase subunit alpha of Gloeobacter violaceus (strain ATCC 29082 / PCC 7421).